Reading from the N-terminus, the 210-residue chain is Large ribosomal subunit protein uL4 (210 aa).

Positions 44-79 (QHQGTHKVKTRSEVSGGGRKPYRQKGTGNARRGSSR) are disordered.

It belongs to the universal ribosomal protein uL4 family. Part of the 50S ribosomal subunit.

Functionally, one of the primary rRNA binding proteins, this protein initially binds near the 5'-end of the 23S rRNA. It is important during the early stages of 50S assembly. It makes multiple contacts with different domains of the 23S rRNA in the assembled 50S subunit and ribosome. In terms of biological role, forms part of the polypeptide exit tunnel. In Chloroherpeton thalassium (strain ATCC 35110 / GB-78), this protein is Large ribosomal subunit protein uL4.